The following is a 206-amino-acid chain: 2-oxoglutarate-dependent dioxygenase iboH (206 aa).

Positions 51–157 constitute a Fe2OG dioxygenase domain; sequence PSTTTLVLLH…RYSIAYFLRP (107 aa). Residues histidine 75, aspartate 77, and histidine 134 each contribute to the Fe cation site. Arginine 148 serves as a coordination point for 2-oxoglutarate.

This sequence belongs to the iron/ascorbate-dependent oxidoreductase family. Requires Fe(2+) as cofactor.

It carries out the reaction L-glutamate + 2-oxoglutarate + O2 = (3R)-3-hydroxy-L-glutamate + succinate + CO2. It participates in secondary metabolite biosynthesis. Its function is as follows. 2-oxoglutarate-dependent dioxygenase; part of the gene cluster that mediates the biosynthesis of the psychoactive metabolites ibotenic acid and muscimol. The first committed step is glutamate hydroxylation by the 2-oxoglutarate-dependent dioxygenase iboH, and the last step is decarboxylation of ibotenic acid to muscimol by the decarboxylase iboD. The order of the intermediate reactions is somewhat ambiguous. IboA likely activates the carboxylic acid at position 5 to introduce an amide bond, and the flavin monooxygenase iboF generates the N-O bond. There are several options for the latter step. One option is that iboF directly hydroxylates the amide nitrogen formed by iboA to produce a hydroxamic acid species. Another option is that iboF hydroxylates an external N-containing compound, whose resulting N-O bond is subsequently introduced into the hydroxyglutamate scaffold. The paralogous PLP-dependent cystathionine gamma-synthase-like enzymes iboG1 and iboG2 are likely involved in substitution of the OH group at position 3 by the O-N moiety. The first cyclic intermediate is most probably tricholomic acid which is likely desaturated to ibotenic acid by the cytochrome P450 monooxygenase iboC. This Amanita muscaria (strain Koide BX008) protein is 2-oxoglutarate-dependent dioxygenase iboH.